A 368-amino-acid chain; its full sequence is Peptide chain release factor 2 (368 aa).

Gln249 is modified (N5-methylglutamine).

The protein belongs to the prokaryotic/mitochondrial release factor family. Post-translationally, methylated by PrmC. Methylation increases the termination efficiency of RF2.

It is found in the cytoplasm. Peptide chain release factor 2 directs the termination of translation in response to the peptide chain termination codons UGA and UAA. The polypeptide is Peptide chain release factor 2 (Rhodococcus erythropolis (strain PR4 / NBRC 100887)).